Consider the following 541-residue polypeptide: Halolysin-like extracellular serine protease Nep (541 aa).

The tat-type signal signal peptide spans Met-1 to Ala-33. Positions Thr-34 to Val-121 are excised as a propeptide. A Peptidase S8 domain is found at Gln-130–Val-405. Active-site charge relay system residues include Asp-157, His-198, and Ser-351. The tract at residues Leu-403–Asp-453 is disordered. Residues Asp-410–Asp-432 show a composition bias toward acidic residues.

Belongs to the peptidase S8 family. Monomer. Post-translationally, exported by the Tat system. The position of the signal peptide cleavage has not been experimentally proven. After transport across the membrane, the propeptide is probably processed autocatalytically, yielding the mature fully active protease.

Its subcellular location is the secreted. Its activity is regulated as follows. Dependent on high salt concentrations for activity and stability. Strongly inhibited by the serine protease inhibitors diisopropyl fluorophosphate (DFP), phenylmethyl sulfonylfluoride (PMSF) and chymostatin. Also inhibited by denaturing agents such as SDS, urea, and HCl guanidinium. Activated by thiol-containing reducing agents such as dithiotreitol (DTT) and 2-mercaptoethanol. Serine protease that hydrolyzes large proteins such as casein and gelatin. Cleaves preferentially at the carboxyl terminus of Phe, Tyr or Leu. Is also able to catalyze peptide synthesis under different salt concentrations in the presence of dimethyl sulfoxide (DMSO). The protein is Halolysin-like extracellular serine protease Nep of Natrialba magadii.